The following is a 344-amino-acid chain: Dihydroorotase (344 aa).

Zn(2+)-binding residues include H13 and H15. Residues 15–17 and N41 each bind substrate; that span reads HFR. Zn(2+) is bound by residues K98, H135, and H173. K98 is subject to N6-carboxylysine. H135 contributes to the substrate binding site. L218 is a substrate binding site. D246 is a binding site for Zn(2+). D246 is a catalytic residue. Residues H250 and A262 each coordinate substrate.

The protein belongs to the metallo-dependent hydrolases superfamily. DHOase family. Class II DHOase subfamily. Homodimer. Zn(2+) serves as cofactor.

The catalysed reaction is (S)-dihydroorotate + H2O = N-carbamoyl-L-aspartate + H(+). It participates in pyrimidine metabolism; UMP biosynthesis via de novo pathway; (S)-dihydroorotate from bicarbonate: step 3/3. Catalyzes the reversible cyclization of carbamoyl aspartate to dihydroorotate. This Pseudoalteromonas atlantica (strain T6c / ATCC BAA-1087) protein is Dihydroorotase.